The following is a 394-amino-acid chain: Flap endonuclease 1-A (394 aa).

The N-domain stretch occupies residues 1–105 (MGIKGLTKLI…RELAKRFARR (105 aa)). Mg(2+) is bound at residue D34. DNA is bound at residue R71. D87, E159, E161, D180, and D182 together coordinate Mg(2+). The tract at residues 123–254 (DVEKYSKKTV…QTALKMIRQH (132 aa)) is I-domain. Position 159 (E159) interacts with DNA. G232 and D234 together coordinate DNA. D234 is a binding site for Mg(2+). Positions 338-346 (SQGRLESFF) are interaction with PCNA. The interval 343–394 (ESFFGVSSSSSNKRKEAPDSEASAGKQVKTAAAVKPAKAASKKGPAKGGKKK) is disordered. Positions 368 to 381 (KQVKTAAAVKPAKA) are enriched in low complexity. Positions 382 to 394 (ASKKGPAKGGKKK) are enriched in basic residues.

This sequence belongs to the XPG/RAD2 endonuclease family. FEN1 subfamily. In terms of assembly, interacts with PCNA. Three molecules of FEN1 bind to one PCNA trimer with each molecule binding to one PCNA monomer. PCNA stimulates the nuclease activity without altering cleavage specificity. Requires Mg(2+) as cofactor. Phosphorylated. Phosphorylation upon DNA damage induces relocalization to the nuclear plasma.

Its subcellular location is the nucleus. It is found in the nucleolus. The protein resides in the nucleoplasm. The protein localises to the mitochondrion. Its function is as follows. Structure-specific nuclease with 5'-flap endonuclease and 5'-3' exonuclease activities involved in DNA replication and repair. During DNA replication, cleaves the 5'-overhanging flap structure that is generated by displacement synthesis when DNA polymerase encounters the 5'-end of a downstream Okazaki fragment. It enters the flap from the 5'-end and then tracks to cleave the flap base, leaving a nick for ligation. Also involved in the long patch base excision repair (LP-BER) pathway, by cleaving within the apurinic/apyrimidinic (AP) site-terminated flap. Acts as a genome stabilization factor that prevents flaps from equilibrating into structures that lead to duplications and deletions. Also possesses 5'-3' exonuclease activity on nicked or gapped double-stranded DNA, and exhibits RNase H activity. Also involved in replication and repair of rDNA and in repairing mitochondrial DNA. The polypeptide is Flap endonuclease 1-A (Physcomitrium patens (Spreading-leaved earth moss)).